An 82-amino-acid chain; its full sequence is Antimicrobial peptide Smp43 (82 aa).

Positions 1–22 are cleaved as a signal peptide; the sequence is MNRKLLLVTLMVTMLVMQPAEA. Residues 66–82 constitute a propeptide that is removed on maturation; sequence EAGQMPFDEFMDILYES.

This sequence belongs to the non-disulfide-bridged peptide (NDBP) superfamily. Long chain multifunctional peptide (group 2) family. In terms of tissue distribution, expressed by the venom gland.

It is found in the secreted. The protein localises to the target cell membrane. Functionally, antimicrobial peptide with moderate activity against Gram-positive bacteria and Gram-negative bacteria, as well as low activity against fungi. Acts by inducing bacterial membrane disruption. Shows activity against B.subtilis (MIC=4 ug/ml), S.epidermidis (MIC=64 ug/ml), S.aureus (MIC=32 ug/ml), E.coli (MIC=128 ug/ml), K.pneumoniae (MIC=64 ug/ml), P.aeruginosa (MIC=64 ug/ml), and C.albicans (MIC=128 ug/ml). Does not show hemolysis activity. The protein is Antimicrobial peptide Smp43 of Scorpio palmatus (Israeli golden scorpion).